The chain runs to 130 residues: Riboflavin kinase (130 aa).

12-17 (GLGVGA) provides a ligand contact to CDP. Positions 39 and 41 each coordinate Mg(2+). Threonine 90 and glutamate 98 together coordinate FMN. Residue 103-106 (KNLR) coordinates CDP.

This sequence belongs to the archaeal riboflavin kinase family. Mg(2+) is required as a cofactor.

It carries out the reaction riboflavin + CTP = CDP + FMN + H(+). The protein operates within cofactor biosynthesis; FMN biosynthesis; FMN from riboflavin (CTP route): step 1/1. In terms of biological role, catalyzes the CTP-dependent phosphorylation of riboflavin (vitamin B2) to form flavin mononucleotide (FMN). The protein is Riboflavin kinase of Staphylothermus marinus (strain ATCC 43588 / DSM 3639 / JCM 9404 / F1).